The sequence spans 430 residues: Lipoyl synthase, mitochondrial (430 aa).

The transit peptide at 1–37 directs the protein to the mitochondrion; the sequence is MAASTGKLRTLFSAHSSLSARPSSALPALRLTILRSY. Residues 40–56 show a composition bias toward low complexity; the sequence is TTPPDSSISNPSNPSTT. Residues 40–64 form a disordered region; sequence TTPPDSSISNPSNPSTTVKRPPTAF. [4Fe-4S] cluster contacts are provided by C141, C146, C152, C172, C176, C179, and S387. In terms of domain architecture, Radical SAM core spans 155–376; sequence GSSKSAATAT…KERALEMGFL (222 aa).

Belongs to the radical SAM superfamily. Lipoyl synthase family. It depends on [4Fe-4S] cluster as a cofactor.

It localises to the mitochondrion. The enzyme catalyses [[Fe-S] cluster scaffold protein carrying a second [4Fe-4S](2+) cluster] + N(6)-octanoyl-L-lysyl-[protein] + 2 oxidized [2Fe-2S]-[ferredoxin] + 2 S-adenosyl-L-methionine + 4 H(+) = [[Fe-S] cluster scaffold protein] + N(6)-[(R)-dihydrolipoyl]-L-lysyl-[protein] + 4 Fe(3+) + 2 hydrogen sulfide + 2 5'-deoxyadenosine + 2 L-methionine + 2 reduced [2Fe-2S]-[ferredoxin]. The protein operates within protein modification; protein lipoylation via endogenous pathway; protein N(6)-(lipoyl)lysine from octanoyl-[acyl-carrier-protein]: step 2/2. Catalyzes the radical-mediated insertion of two sulfur atoms into the C-6 and C-8 positions of the octanoyl moiety bound to the lipoyl domains of lipoate-dependent enzymes, thereby converting the octanoylated domains into lipoylated derivatives. In Blastomyces gilchristii (strain SLH14081) (Blastomyces dermatitidis), this protein is Lipoyl synthase, mitochondrial.